The sequence spans 351 residues: Holliday junction branch migration complex subunit RuvB (351 aa).

Residues 1–186 (MDEKIETRLI…FGIVQRLEFY (186 aa)) are large ATPase domain (RuvB-L). Residues Ile-25, Arg-26, Gly-67, Lys-70, Thr-71, Thr-72, 133–135 (EDF), Arg-176, Tyr-186, and Arg-223 contribute to the ATP site. Mg(2+) is bound at residue Thr-71. The small ATPAse domain (RuvB-S) stretch occupies residues 187–257 (RIPDLIHIVK…IAKEALDLLN (71 aa)). The segment at 260–351 (IRGLDVMDRK…ENFDLLGKVE (92 aa)) is head domain (RuvB-H). DNA-binding residues include Arg-296, Arg-315, and Arg-320.

Belongs to the RuvB family. In terms of assembly, homohexamer. Forms an RuvA(8)-RuvB(12)-Holliday junction (HJ) complex. HJ DNA is sandwiched between 2 RuvA tetramers; dsDNA enters through RuvA and exits via RuvB. An RuvB hexamer assembles on each DNA strand where it exits the tetramer. Each RuvB hexamer is contacted by two RuvA subunits (via domain III) on 2 adjacent RuvB subunits; this complex drives branch migration. In the full resolvosome a probable DNA-RuvA(4)-RuvB(12)-RuvC(2) complex forms which resolves the HJ.

It is found in the cytoplasm. It catalyses the reaction ATP + H2O = ADP + phosphate + H(+). The RuvA-RuvB-RuvC complex processes Holliday junction (HJ) DNA during genetic recombination and DNA repair, while the RuvA-RuvB complex plays an important role in the rescue of blocked DNA replication forks via replication fork reversal (RFR). RuvA specifically binds to HJ cruciform DNA, conferring on it an open structure. The RuvB hexamer acts as an ATP-dependent pump, pulling dsDNA into and through the RuvAB complex. RuvB forms 2 homohexamers on either side of HJ DNA bound by 1 or 2 RuvA tetramers; 4 subunits per hexamer contact DNA at a time. Coordinated motions by a converter formed by DNA-disengaged RuvB subunits stimulates ATP hydrolysis and nucleotide exchange. Immobilization of the converter enables RuvB to convert the ATP-contained energy into a lever motion, pulling 2 nucleotides of DNA out of the RuvA tetramer per ATP hydrolyzed, thus driving DNA branch migration. The RuvB motors rotate together with the DNA substrate, which together with the progressing nucleotide cycle form the mechanistic basis for DNA recombination by continuous HJ branch migration. Branch migration allows RuvC to scan DNA until it finds its consensus sequence, where it cleaves and resolves cruciform DNA. The protein is Holliday junction branch migration complex subunit RuvB of Coxiella burnetii (strain RSA 331 / Henzerling II).